A 243-amino-acid polypeptide reads, in one-letter code: NAD-dependent protein deacetylase (243 aa).

The Deacetylase sirtuin-type domain occupies 1-243 (MKHDLETLKH…VSVVKSLMTE (243 aa)). Residues Ala24, Phe35, Arg36, Gln105, Ile107, Asp108, and His123 each contribute to the NAD(+) site. Phe35 serves as a coordination point for nicotinamide. The nicotinamide site is built by Ile107 and Asp108. Residue His123 is the Proton acceptor of the active site. The Zn(2+) site is built by Cys131, Cys134, Cys151, and Cys154. Residues Ser192, Ser193, Asn215, and Asp232 each coordinate NAD(+).

The protein belongs to the sirtuin family. Class U subfamily. Zn(2+) serves as cofactor.

It is found in the cytoplasm. It carries out the reaction N(6)-acetyl-L-lysyl-[protein] + NAD(+) + H2O = 2''-O-acetyl-ADP-D-ribose + nicotinamide + L-lysyl-[protein]. In terms of biological role, NAD-dependent protein deacetylase which modulates the activities of several enzymes which are inactive in their acetylated form. The polypeptide is NAD-dependent protein deacetylase (Staphylococcus aureus (strain NCTC 8325 / PS 47)).